Reading from the N-terminus, the 180-residue chain is Signal peptidase complex subunit 2 (180 aa).

Over 1-45 (MTDEPVKVVNKWDGPTVKNALDEVVKKILNDKVGWTESHNLMNLR) the chain is Cytoplasmic. The helical transmembrane segment at 46-66 (LLISFIGVAFSAFACGYDYYE) threads the bilayer. Over 67–72 (PFPKSK) the chain is Lumenal. Residues 73 to 93 (IVLAVCSVSYFICMGILQMYQ) form a helical membrane-spanning segment. Topologically, residues 94 to 180 (WYVEKDCIYE…LYNRLIRSEQ (87 aa)) are cytoplasmic.

It belongs to the SPCS2 family. In terms of assembly, component of the signal peptidase complex (SPC) composed of a catalytic subunit sec-11 and three accessory subunits spcs-1, spcs-2 and spcs-3. The complex induces a local thinning of the ER membrane which is used to measure the length of the signal peptide (SP) h-region of protein substrates. This ensures the selectivity of the complex towards h-regions shorter than 18-20 amino acids.

The protein localises to the endoplasmic reticulum membrane. Component of the signal peptidase complex (SPC) which catalyzes the cleavage of N-terminal signal sequences from nascent proteins as they are translocated into the lumen of the endoplasmic reticulum. Enhances the enzymatic activity of SPC and facilitates the interactions between different components of the translocation site. This chain is Signal peptidase complex subunit 2, found in Caenorhabditis elegans.